A 513-amino-acid chain; its full sequence is 2,3-bisphosphoglycerate-independent phosphoglycerate mutase (513 aa).

2 residues coordinate Mn(2+): D12 and S62. S62 acts as the Phosphoserine intermediate in catalysis. Substrate contacts are provided by residues H123, 153–154 (RD), R185, R191, 261–264 (RSDR), and K335. 5 residues coordinate Mn(2+): D402, H406, D443, H444, and H462.

Belongs to the BPG-independent phosphoglycerate mutase family. In terms of assembly, monomer. Requires Mn(2+) as cofactor.

It carries out the reaction (2R)-2-phosphoglycerate = (2R)-3-phosphoglycerate. The protein operates within carbohydrate degradation; glycolysis; pyruvate from D-glyceraldehyde 3-phosphate: step 3/5. Catalyzes the interconversion of 2-phosphoglycerate and 3-phosphoglycerate. The polypeptide is 2,3-bisphosphoglycerate-independent phosphoglycerate mutase (Thiobacillus denitrificans (strain ATCC 25259 / T1)).